Consider the following 229-residue polypeptide: Large ribosomal subunit protein uL4 (229 aa).

Positions 62-103 are disordered; sequence SRRQGTHQVKNRAAVSGSGKKPWKQKGTGRARHSSRRSPIWV. A compositionally biased stretch (basic residues) spans 82–97; it reads KPWKQKGTGRARHSSR.

The protein belongs to the universal ribosomal protein uL4 family. Part of the 50S ribosomal subunit.

One of the primary rRNA binding proteins, this protein initially binds near the 5'-end of the 23S rRNA. It is important during the early stages of 50S assembly. It makes multiple contacts with different domains of the 23S rRNA in the assembled 50S subunit and ribosome. Its function is as follows. Forms part of the polypeptide exit tunnel. The protein is Large ribosomal subunit protein uL4 of Mycoplasmopsis synoviae (strain 53) (Mycoplasma synoviae).